A 261-amino-acid chain; its full sequence is Beta cell expansion factor A (261 aa).

A signal peptide spans methionine 1 to alanine 21. The interval lysine 99–arginine 261 is SYLF domain.

Its subcellular location is the secreted. It is found in the host. Its function is as follows. Stimulates the proliferation of insulin-producing beta cells during development in gnotobiotic zebrafish and mice. BefA is a microbiome-derived protein that traffics from the host intestinal lumen to the pancreas to act directly on pancreatic islets. In pancreas, interacts directly with host beta cells and elicits their proliferation via a mechanism of increasing membrane permeabilization. Can also permeabilize bacterial cell membranes, but does not show killing of target bacteria. The polypeptide is Beta cell expansion factor A (Aeromonas veronii).